Here is a 218-residue protein sequence, read N- to C-terminus: Thiopurine S-methyltransferase (218 aa).

S-adenosyl-L-methionine-binding residues include tryptophan 10, leucine 45, glutamate 66, and arginine 123.

The protein belongs to the class I-like SAM-binding methyltransferase superfamily. TPMT family.

It localises to the cytoplasm. It carries out the reaction S-adenosyl-L-methionine + a thiopurine = S-adenosyl-L-homocysteine + a thiopurine S-methylether.. This Shewanella denitrificans (strain OS217 / ATCC BAA-1090 / DSM 15013) protein is Thiopurine S-methyltransferase.